The sequence spans 572 residues: Linalool synthase TPS2, chloroplastic (572 aa).

The N-terminal 27 residues, 1–27 (EVEEPKTKISASTAEASSSRISSAKMT), are a transit peptide targeting the chloroplast. The tract at residues 1–45 (EVEEPKTKISASTAEASSSRISSAKMTADGTIKLGDQSPLKQSEK) is disordered. The segment covering 8–28 (KISASTAEASSSRISSAKMTA) has biased composition (low complexity). Residues R284, D321, D325, R462, and N465 each coordinate (2E)-geranyl diphosphate. Positions 321 and 325 each coordinate Mg(2+). The DDXXD motif motif lies at 321-325 (DDVYD). Residues N465, T469, and S473 each contribute to the Mg(2+) site.

This sequence belongs to the terpene synthase family. Tpsb subfamily. Monomer. The cofactor is Mg(2+). It depends on Mn(2+) as a cofactor. Expressed in flowers and fruits.

It localises to the plastid. Its subcellular location is the chloroplast. The enzyme catalyses (2E)-geranyl diphosphate = beta-myrcene + diphosphate. It carries out the reaction (2E)-geranyl diphosphate + H2O = linalool + diphosphate. It catalyses the reaction (2E)-geranyl diphosphate = (Z)-beta-ocimene + diphosphate. The catalysed reaction is (2E)-geranyl diphosphate = (E)-beta-ocimene + diphosphate. It functions in the pathway secondary metabolite biosynthesis; terpenoid biosynthesis. In terms of biological role, monoterpene synthase (mono-TPS) involved in the biosynthesis of monoterpenes natural products, constituent of coffee beverage aroma. Catalyzes the conversion of (2E)-geranyl diphosphate (GPP) into linalool and beta-myrcene, and, as minor products, cis-ocimene and trans-ocimene. Not able to use geranylgeranyl pyrophosphate (GGPP) and farnesyl pyrophosphate (FPP) as substrates. This Coffea arabica (Arabian coffee) protein is Linalool synthase TPS2, chloroplastic.